Consider the following 231-residue polypeptide: LexA repressor (231 aa).

The segment at residues 26 to 46 is a DNA-binding region (H-T-H motif); the sequence is FDEMKDALDLRSKSGIHRLIT. Catalysis depends on for autocatalytic cleavage activity residues Ser152 and Lys190.

This sequence belongs to the peptidase S24 family. As to quaternary structure, homodimer.

It carries out the reaction Hydrolysis of Ala-|-Gly bond in repressor LexA.. Its function is as follows. Represses a number of genes involved in the response to DNA damage (SOS response), including recA and lexA. In the presence of single-stranded DNA, RecA interacts with LexA causing an autocatalytic cleavage which disrupts the DNA-binding part of LexA, leading to derepression of the SOS regulon and eventually DNA repair. The chain is LexA repressor from Bradyrhizobium diazoefficiens (strain JCM 10833 / BCRC 13528 / IAM 13628 / NBRC 14792 / USDA 110).